Consider the following 232-residue polypeptide: Phosphatidylserine decarboxylase proenzyme (232 aa).

Residue serine 190 is the Schiff-base intermediate with substrate; via pyruvic acid of the active site. Residue serine 190 is modified to Pyruvic acid (Ser); by autocatalysis.

This sequence belongs to the phosphatidylserine decarboxylase family. PSD-A subfamily. Heterodimer of a large membrane-associated beta subunit and a small pyruvoyl-containing alpha subunit. Pyruvate serves as cofactor. In terms of processing, is synthesized initially as an inactive proenzyme. Formation of the active enzyme involves a self-maturation process in which the active site pyruvoyl group is generated from an internal serine residue via an autocatalytic post-translational modification. Two non-identical subunits are generated from the proenzyme in this reaction, and the pyruvate is formed at the N-terminus of the alpha chain, which is derived from the carboxyl end of the proenzyme. The post-translation cleavage follows an unusual pathway, termed non-hydrolytic serinolysis, in which the side chain hydroxyl group of the serine supplies its oxygen atom to form the C-terminus of the beta chain, while the remainder of the serine residue undergoes an oxidative deamination to produce ammonia and the pyruvoyl prosthetic group on the alpha chain.

The protein localises to the cell membrane. The catalysed reaction is a 1,2-diacyl-sn-glycero-3-phospho-L-serine + H(+) = a 1,2-diacyl-sn-glycero-3-phosphoethanolamine + CO2. Its pathway is phospholipid metabolism; phosphatidylethanolamine biosynthesis; phosphatidylethanolamine from CDP-diacylglycerol: step 2/2. Catalyzes the formation of phosphatidylethanolamine (PtdEtn) from phosphatidylserine (PtdSer). The sequence is that of Phosphatidylserine decarboxylase proenzyme from Bradyrhizobium sp. (strain ORS 278).